The chain runs to 352 residues: MKKVVVGLSGGVDSSTAAAILHNQGYEVIGLTLWLMKGKGQCCSEGMIDAAYICEQLGIPHEVVDMRDVFQTHIVDYLVTGYGAGITPLPCSQCNKTVKFGPMVQYAREQLGCDRIATGHYARISYDEASGRYQLLRAVDRNKDQSYFLYDLSQDLLAASLFPLGEMEKADTRRIATEHGLKTADKPESQDLCLVESNGSMRAFLDKYIAPKKGDIVDTAGKILGQHDGVHHYTIGQRKGLGIAAPEPLYVVELDAVNNKVVVGDRTKATQEECTVSRVNWVSIPEPSTPIRAAVQIRYRSAPEPVTVIPLENSRVRLVFDEPQFSITPGQAAVWYDGDKVLGGGIIEQFSN.

ATP is bound by residues 7 to 14 (GLSGGVDS) and Leu-33. Cys-94 serves as the catalytic Nucleophile. Cysteines 94 and 193 form a disulfide. Gly-119 contributes to the ATP binding site. Residues 143-145 (KDQ) are interaction with tRNA. Catalysis depends on Cys-193, which acts as the Cysteine persulfide intermediate. The interaction with tRNA stretch occupies residues 298 to 299 (RY).

The protein belongs to the MnmA/TRMU family.

It localises to the cytoplasm. It carries out the reaction S-sulfanyl-L-cysteinyl-[protein] + uridine(34) in tRNA + AH2 + ATP = 2-thiouridine(34) in tRNA + L-cysteinyl-[protein] + A + AMP + diphosphate + H(+). Its function is as follows. Catalyzes the 2-thiolation of uridine at the wobble position (U34) of tRNA, leading to the formation of s(2)U34. The chain is tRNA-specific 2-thiouridylase MnmA from Trichormus variabilis (strain ATCC 29413 / PCC 7937) (Anabaena variabilis).